Consider the following 131-residue polypeptide: ATP synthase epsilon chain, chloroplastic (131 aa).

This sequence belongs to the ATPase epsilon chain family. F-type ATPases have 2 components, CF(1) - the catalytic core - and CF(0) - the membrane proton channel. CF(1) has five subunits: alpha(3), beta(3), gamma(1), delta(1), epsilon(1). CF(0) has three main subunits: a, b and c.

It is found in the plastid. Its subcellular location is the chloroplast thylakoid membrane. In terms of biological role, produces ATP from ADP in the presence of a proton gradient across the membrane. The protein is ATP synthase epsilon chain, chloroplastic of Cyanidioschyzon merolae (strain NIES-3377 / 10D) (Unicellular red alga).